The following is an 859-amino-acid chain: Bifunctional uridylyltransferase/uridylyl-removing enzyme (859 aa).

Residues 1 to 325 form a uridylyltransferase region; it reads MSAHAAPSPE…PATSGITRVL (325 aa). The segment at 326–682 is uridylyl-removing; it reads SHDRFVEKQG…ARPSPIGDAL (357 aa). The HD domain maps to 444–566; sequence VDQHILMVLR…VGNERYLTAL (123 aa). ACT domains are found at residues 683-762 and 791-859; these read QVLV…PEPS and ILSV…AIAV.

It belongs to the GlnD family. Mg(2+) is required as a cofactor.

It carries out the reaction [protein-PII]-L-tyrosine + UTP = [protein-PII]-uridylyl-L-tyrosine + diphosphate. The catalysed reaction is [protein-PII]-uridylyl-L-tyrosine + H2O = [protein-PII]-L-tyrosine + UMP + H(+). Uridylyltransferase (UTase) activity is inhibited by glutamine, while glutamine activates uridylyl-removing (UR) activity. Functionally, modifies, by uridylylation and deuridylylation, the PII regulatory proteins (GlnB and homologs), in response to the nitrogen status of the cell that GlnD senses through the glutamine level. Under low glutamine levels, catalyzes the conversion of the PII proteins and UTP to PII-UMP and PPi, while under higher glutamine levels, GlnD hydrolyzes PII-UMP to PII and UMP (deuridylylation). Thus, controls uridylylation state and activity of the PII proteins, and plays an important role in the regulation of nitrogen fixation and metabolism. This Burkholderia vietnamiensis (strain G4 / LMG 22486) (Burkholderia cepacia (strain R1808)) protein is Bifunctional uridylyltransferase/uridylyl-removing enzyme.